Reading from the N-terminus, the 219-residue chain is Holliday junction branch migration complex subunit RuvA (219 aa).

A domain I region spans residues 1-71 (MISWIKGELV…EDSDMLFGFS (71 aa)). Positions 72–150 (TKDQRDFFIQ…NKEIEKENLN (79 aa)) are domain II. The interval 151 to 161 (INNFLEKNKDL) is flexible linker. The domain III stretch occupies residues 161–219 (LDSIFKDIDLTLQSLNYSKKEIKNLFPKLINNIKNSSLEKESISFENLLKEAMNYLDHK).

Belongs to the RuvA family. As to quaternary structure, homotetramer. Forms an RuvA(8)-RuvB(12)-Holliday junction (HJ) complex. HJ DNA is sandwiched between 2 RuvA tetramers; dsDNA enters through RuvA and exits via RuvB. An RuvB hexamer assembles on each DNA strand where it exits the tetramer. Each RuvB hexamer is contacted by two RuvA subunits (via domain III) on 2 adjacent RuvB subunits; this complex drives branch migration. In the full resolvosome a probable DNA-RuvA(4)-RuvB(12)-RuvC(2) complex forms which resolves the HJ.

It is found in the cytoplasm. The RuvA-RuvB-RuvC complex processes Holliday junction (HJ) DNA during genetic recombination and DNA repair, while the RuvA-RuvB complex plays an important role in the rescue of blocked DNA replication forks via replication fork reversal (RFR). RuvA specifically binds to HJ cruciform DNA, conferring on it an open structure. The RuvB hexamer acts as an ATP-dependent pump, pulling dsDNA into and through the RuvAB complex. HJ branch migration allows RuvC to scan DNA until it finds its consensus sequence, where it cleaves and resolves the cruciform DNA. In Prochlorococcus marinus subsp. pastoris (strain CCMP1986 / NIES-2087 / MED4), this protein is Holliday junction branch migration complex subunit RuvA.